The sequence spans 346 residues: MSEQKQSLSYKDAGVDIDAGNALVENIKGAVKRTTRPEVMGGLGGFGSVCQLPTGYKEPVLVAGTDGVGTKLRLAIDLAKHDTVGIDLVAMCVNDLIVQGAEPLFFLDYYATAKLDVAVASSVVEGIAEGCIQSGCALVGGETAEMPGMYHKGDYDIAGFCVGVAEKSRLIDGTNVAAGDQLIALGASGPHSNGFSLIRKVLEVNNTDTNELLEGKKIADHLLEPTKIYVKSVLELLKNVDVHALSHITGGGFWENIPRVLPETAQAVIKGDSWQWPSIFNWLQENGNITEHEMYRTFNCGVGMVIVVPADKVAQSIEVLTAHGENAWHLGEIADKADGEEQVVFA.

It belongs to the AIR synthase family.

The protein resides in the cytoplasm. The enzyme catalyses 2-formamido-N(1)-(5-O-phospho-beta-D-ribosyl)acetamidine + ATP = 5-amino-1-(5-phospho-beta-D-ribosyl)imidazole + ADP + phosphate + H(+). The protein operates within purine metabolism; IMP biosynthesis via de novo pathway; 5-amino-1-(5-phospho-D-ribosyl)imidazole from N(2)-formyl-N(1)-(5-phospho-D-ribosyl)glycinamide: step 2/2. The chain is Phosphoribosylformylglycinamidine cyclo-ligase from Colwellia psychrerythraea (strain 34H / ATCC BAA-681) (Vibrio psychroerythus).